We begin with the raw amino-acid sequence, 571 residues long: 2-succinyl-5-enolpyruvyl-6-hydroxy-3-cyclohexene-1-carboxylate synthase (571 aa).

It belongs to the TPP enzyme family. MenD subfamily. As to quaternary structure, homodimer. Mg(2+) is required as a cofactor. Mn(2+) serves as cofactor. Requires thiamine diphosphate as cofactor.

The enzyme catalyses isochorismate + 2-oxoglutarate + H(+) = 5-enolpyruvoyl-6-hydroxy-2-succinyl-cyclohex-3-ene-1-carboxylate + CO2. The protein operates within quinol/quinone metabolism; 1,4-dihydroxy-2-naphthoate biosynthesis; 1,4-dihydroxy-2-naphthoate from chorismate: step 2/7. Its pathway is quinol/quinone metabolism; menaquinone biosynthesis. Catalyzes the thiamine diphosphate-dependent decarboxylation of 2-oxoglutarate and the subsequent addition of the resulting succinic semialdehyde-thiamine pyrophosphate anion to isochorismate to yield 2-succinyl-5-enolpyruvyl-6-hydroxy-3-cyclohexene-1-carboxylate (SEPHCHC). The protein is 2-succinyl-5-enolpyruvyl-6-hydroxy-3-cyclohexene-1-carboxylate synthase of Lysinibacillus sphaericus (strain C3-41).